Consider the following 66-residue polypeptide: Large ribosomal subunit protein bL28 (66 aa).

Residues 1–26 (MAKDAITGARTRFGNQRSHALNSSRR) are disordered. Polar residues predominate over residues 13 to 25 (FGNQRSHALNSSR).

Belongs to the bacterial ribosomal protein bL28 family.

This Leuconostoc citreum (strain KM20) protein is Large ribosomal subunit protein bL28.